The sequence spans 466 residues: Soluble pyridine nucleotide transhydrogenase (466 aa).

36-45 (ERYQNVGGGC) contacts FAD.

It belongs to the class-I pyridine nucleotide-disulfide oxidoreductase family. The cofactor is FAD.

Its subcellular location is the cytoplasm. It catalyses the reaction NAD(+) + NADPH = NADH + NADP(+). Conversion of NADPH, generated by peripheral catabolic pathways, to NADH, which can enter the respiratory chain for energy generation. In Shigella boydii serotype 18 (strain CDC 3083-94 / BS512), this protein is Soluble pyridine nucleotide transhydrogenase.